The sequence spans 170 residues: Guided entry of tail-anchored proteins factor 1 (170 aa).

Residues 1 to 6 (MAAGFN) lie on the Lumenal side of the membrane. Residues 7–27 (WFLVLSSVFLCNLVKTFLPSI) traverse the membrane as a helical segment. Residues 28–96 (SSFLSKIFHK…KSRTAQQAKM (69 aa)) are Cytoplasmic-facing. Positions 35-93 (FHKDADQEMEMRTEIQNMKMELSTISMMDEFARYARLERKINKMTDQLKTLVKSRTAQQ) are interaction with GET3/TRC40. The stretch at 61 to 91 (MMDEFARYARLERKINKMTDQLKTLVKSRTA) forms a coiled coil. The helical transmembrane segment at 97 to 117 (KWIVNIAFYILQAALMISLIL) threads the bilayer. The Lumenal portion of the chain corresponds to 118–137 (KYYADPVTVVPSKWIAPLER). The chain crosses the membrane as a helical span at residues 138-158 (LVAFPSGVAGGVGITCWLVVC). Residues 159–170 (NKVVALILQAVS) lie on the Cytoplasmic side of the membrane.

This sequence belongs to the WRB/GET1 family. Component of the Golgi to ER traffic (GET) complex, which is composed of GET1/WRB, CAMLG/GET2 and GET3/TRC40. Within the complex, GET1 and CAMLG form a heterotetramer which is stabilized by phosphatidylinositol binding and which binds to the GET3 homodimer.

It localises to the endoplasmic reticulum membrane. Required for the post-translational delivery of tail-anchored (TA) proteins to the endoplasmic reticulum (ER). Together with CAMLG/GET2, acts as a membrane receptor for soluble GET3/TRC40, which recognizes and selectively binds the transmembrane domain of TA proteins in the cytosol. Required to ensure correct topology and ER insertion of CAMLG. This is Guided entry of tail-anchored proteins factor 1 from Danio rerio (Zebrafish).